Reading from the N-terminus, the 612-residue chain is Dihydroxy-acid dehydratase (612 aa).

Aspartate 81 contributes to the Mg(2+) binding site. Cysteine 122 contributes to the [2Fe-2S] cluster binding site. Aspartate 123 and lysine 124 together coordinate Mg(2+). Lysine 124 is modified (N6-carboxylysine). Cysteine 195 contributes to the [2Fe-2S] cluster binding site. Glutamate 491 lines the Mg(2+) pocket. Catalysis depends on serine 517, which acts as the Proton acceptor.

Belongs to the IlvD/Edd family. As to quaternary structure, homodimer. Requires [2Fe-2S] cluster as cofactor. It depends on Mg(2+) as a cofactor.

The enzyme catalyses (2R)-2,3-dihydroxy-3-methylbutanoate = 3-methyl-2-oxobutanoate + H2O. It carries out the reaction (2R,3R)-2,3-dihydroxy-3-methylpentanoate = (S)-3-methyl-2-oxopentanoate + H2O. The protein operates within amino-acid biosynthesis; L-isoleucine biosynthesis; L-isoleucine from 2-oxobutanoate: step 3/4. It participates in amino-acid biosynthesis; L-valine biosynthesis; L-valine from pyruvate: step 3/4. Functions in the biosynthesis of branched-chain amino acids. Catalyzes the dehydration of (2R,3R)-2,3-dihydroxy-3-methylpentanoate (2,3-dihydroxy-3-methylvalerate) into 2-oxo-3-methylpentanoate (2-oxo-3-methylvalerate) and of (2R)-2,3-dihydroxy-3-methylbutanoate (2,3-dihydroxyisovalerate) into 2-oxo-3-methylbutanoate (2-oxoisovalerate), the penultimate precursor to L-isoleucine and L-valine, respectively. The chain is Dihydroxy-acid dehydratase from Psychromonas ingrahamii (strain DSM 17664 / CCUG 51855 / 37).